The chain runs to 279 residues: Replication factor A protein 2 (279 aa).

The disordered stretch occupies residues 26-47 (GAGFNEYDQSSQPSVDRQQGAG). Residues 32 to 46 (YDQSSQPSVDRQQGA) show a composition bias toward polar residues. Residues 80–140 (VTFVGVLRNI…GNIKIFSGKI (61 aa)) constitute a DNA-binding region (OB).

Belongs to the replication factor A protein 2 family. In terms of assembly, heterotrimer of 68, 30, and 12 kDa chains. Phosphorylated in a cell cycle-dependent manner. Hypophosphorylated in G1, becomes phosphorylated at the G1/S boundary, it is maintained in this state through the M phase.

The protein resides in the nucleus. Functionally, binds to single-stranded sequences. The protein is Replication factor A protein 2 (ssb2) of Schizosaccharomyces pombe (strain 972 / ATCC 24843) (Fission yeast).